Here is a 339-residue protein sequence, read N- to C-terminus: Protein FAM76B (339 aa).

Residue Ala-2 is modified to N-acetylalanine. 2 positions are modified to phosphoserine: Ser-22 and Ser-148. Residues 144 to 243 form a disordered region; sequence EQRKSLGSSH…INQSADSGGT (100 aa). Low complexity predominate over residues 148–160; it reads SLGSSHSNSSSSS. Positions 167–189 are enriched in basic residues; it reads HHPKHHHHHHHHHHRHSSSHHKI. Ser-193 carries the phosphoserine modification. Thr-215 carries the phosphothreonine modification. Over residues 215–224 the composition is skewed to basic and acidic residues; sequence TPKKKPKLES. The segment covering 228–243 has biased composition (polar residues); it reads NGDSSSINQSADSGGT. Positions 248-328 form a coiled coil; the sequence is LISQLKEEVM…QVAALSKGKK (81 aa).

It belongs to the FAM76 family. As to quaternary structure, interacts with HNRNPA2B1 (via C-terminus); the interaction results in retention of HNRNPA2B1 in the nucleus and inhibition of the NF-kappa-B-mediated inflammatory pathway.

Its subcellular location is the nucleus speckle. In terms of biological role, negatively regulates the NF-kappa-B-mediated inflammatory pathway by preventing the translocation of HNRNPA2B1 from the nucleus to the cytoplasm. Inhibits the PI3K/Akt/NF-kappa-B pathway-mediated polarization of M1 macrophages by binding to and stabilizing PIK3CD mRNA, resulting in increased levels of PIK3CD protein and increased levels of phosphorylated downstream target AKT which leads to decreased NF-kappa-B signaling. The polypeptide is Protein FAM76B (FAM76B) (Homo sapiens (Human)).